The chain runs to 296 residues: Phosphatidylserine decarboxylase proenzyme (296 aa).

Residues Asp-92, His-149, and Ser-251 each act as charge relay system; for autoendoproteolytic cleavage activity in the active site. The Schiff-base intermediate with substrate; via pyruvic acid; for decarboxylase activity role is filled by Ser-251. Ser-251 carries the pyruvic acid (Ser); by autocatalysis modification.

This sequence belongs to the phosphatidylserine decarboxylase family. PSD-B subfamily. Prokaryotic type I sub-subfamily. In terms of assembly, heterodimer of a large membrane-associated beta subunit and a small pyruvoyl-containing alpha subunit. Pyruvate is required as a cofactor. Is synthesized initially as an inactive proenzyme. Formation of the active enzyme involves a self-maturation process in which the active site pyruvoyl group is generated from an internal serine residue via an autocatalytic post-translational modification. Two non-identical subunits are generated from the proenzyme in this reaction, and the pyruvate is formed at the N-terminus of the alpha chain, which is derived from the carboxyl end of the proenzyme. The autoendoproteolytic cleavage occurs by a canonical serine protease mechanism, in which the side chain hydroxyl group of the serine supplies its oxygen atom to form the C-terminus of the beta chain, while the remainder of the serine residue undergoes an oxidative deamination to produce ammonia and the pyruvoyl prosthetic group on the alpha chain. During this reaction, the Ser that is part of the protease active site of the proenzyme becomes the pyruvoyl prosthetic group, which constitutes an essential element of the active site of the mature decarboxylase.

Its subcellular location is the cell membrane. It carries out the reaction a 1,2-diacyl-sn-glycero-3-phospho-L-serine + H(+) = a 1,2-diacyl-sn-glycero-3-phosphoethanolamine + CO2. It functions in the pathway phospholipid metabolism; phosphatidylethanolamine biosynthesis; phosphatidylethanolamine from CDP-diacylglycerol: step 2/2. Catalyzes the formation of phosphatidylethanolamine (PtdEtn) from phosphatidylserine (PtdSer). This Hahella chejuensis (strain KCTC 2396) protein is Phosphatidylserine decarboxylase proenzyme.